A 167-amino-acid chain; its full sequence is MPEQIDGNKLDLEERVVTINRVAKVVKGGRRFRFTALVVVGDKNGHVGFGTGKAQEVPDAIRKAVEDAKKNMVLVPTVDTTIPHTVVGHFGGGEILLKPASAGSGVTAGGPVRAVLELAGVADVSSKSLGSNTPINMVRATIDGIKQLKNAEDVAKLRGKTVEELLG.

Residues 12–75 form the S5 DRBM domain; sequence LEERVVTINR…EDAKKNMVLV (64 aa).

This sequence belongs to the universal ribosomal protein uS5 family. In terms of assembly, part of the 30S ribosomal subunit. Contacts proteins S4 and S8.

In terms of biological role, with S4 and S12 plays an important role in translational accuracy. Its function is as follows. Located at the back of the 30S subunit body where it stabilizes the conformation of the head with respect to the body. The protein is Small ribosomal subunit protein uS5 of Listeria monocytogenes serotype 4b (strain F2365).